Consider the following 355-residue polypeptide: UDP-N-acetylglucosamine--N-acetylmuramyl-(pentapeptide) pyrophosphoryl-undecaprenol N-acetylglucosamine transferase (355 aa).

UDP-N-acetyl-alpha-D-glucosamine-binding positions include 15-17 (TGG), N127, R163, S191, I244, 263-268 (ALTVSE), and Q288.

Belongs to the glycosyltransferase 28 family. MurG subfamily.

It is found in the cell inner membrane. The enzyme catalyses di-trans,octa-cis-undecaprenyl diphospho-N-acetyl-alpha-D-muramoyl-L-alanyl-D-glutamyl-meso-2,6-diaminopimeloyl-D-alanyl-D-alanine + UDP-N-acetyl-alpha-D-glucosamine = di-trans,octa-cis-undecaprenyl diphospho-[N-acetyl-alpha-D-glucosaminyl-(1-&gt;4)]-N-acetyl-alpha-D-muramoyl-L-alanyl-D-glutamyl-meso-2,6-diaminopimeloyl-D-alanyl-D-alanine + UDP + H(+). Its pathway is cell wall biogenesis; peptidoglycan biosynthesis. Its function is as follows. Cell wall formation. Catalyzes the transfer of a GlcNAc subunit on undecaprenyl-pyrophosphoryl-MurNAc-pentapeptide (lipid intermediate I) to form undecaprenyl-pyrophosphoryl-MurNAc-(pentapeptide)GlcNAc (lipid intermediate II). In Escherichia coli O45:K1 (strain S88 / ExPEC), this protein is UDP-N-acetylglucosamine--N-acetylmuramyl-(pentapeptide) pyrophosphoryl-undecaprenol N-acetylglucosamine transferase.